The chain runs to 72 residues: MKLTCVVIVAVLLLTACQLITAEDSRGAQKHRTLRSTARRSKSELTTRCRPSGSPCGVTSICCGRCYRGKCT.

A signal peptide spans 1–22 (MKLTCVVIVAVLLLTACQLITA). The propeptide occupies 23–48 (EDSRGAQKHRTLRSTARRSKSELTTR). 3 cysteine pairs are disulfide-bonded: C49-C63, C56-C66, and C62-C71. P55 is modified (4-hydroxyproline).

Belongs to the conotoxin O1 superfamily. In terms of tissue distribution, expressed by the venom duct.

Its subcellular location is the secreted. Omega-conotoxins act at presynaptic membranes, they bind and block voltage-gated calcium channels (Cav). This Conus striatus (Striated cone) protein is Omega-conotoxin-like SVIA mutant 1.